The primary structure comprises 555 residues: Dihydroxy-acid dehydratase (555 aa).

A Mg(2+)-binding site is contributed by aspartate 78. Position 119 (cysteine 119) interacts with [2Fe-2S] cluster. The Mg(2+) site is built by aspartate 120 and lysine 121. An N6-carboxylysine modification is found at lysine 121. Cysteine 191 is a [2Fe-2S] cluster binding site. Glutamate 444 is a binding site for Mg(2+). Serine 470 (proton acceptor) is an active-site residue.

This sequence belongs to the IlvD/Edd family. As to quaternary structure, homodimer. Requires [2Fe-2S] cluster as cofactor. Mg(2+) serves as cofactor.

It carries out the reaction (2R)-2,3-dihydroxy-3-methylbutanoate = 3-methyl-2-oxobutanoate + H2O. It catalyses the reaction (2R,3R)-2,3-dihydroxy-3-methylpentanoate = (S)-3-methyl-2-oxopentanoate + H2O. It participates in amino-acid biosynthesis; L-isoleucine biosynthesis; L-isoleucine from 2-oxobutanoate: step 3/4. Its pathway is amino-acid biosynthesis; L-valine biosynthesis; L-valine from pyruvate: step 3/4. Its function is as follows. Functions in the biosynthesis of branched-chain amino acids. Catalyzes the dehydration of (2R,3R)-2,3-dihydroxy-3-methylpentanoate (2,3-dihydroxy-3-methylvalerate) into 2-oxo-3-methylpentanoate (2-oxo-3-methylvalerate) and of (2R)-2,3-dihydroxy-3-methylbutanoate (2,3-dihydroxyisovalerate) into 2-oxo-3-methylbutanoate (2-oxoisovalerate), the penultimate precursor to L-isoleucine and L-valine, respectively. This is Dihydroxy-acid dehydratase from Oleidesulfovibrio alaskensis (strain ATCC BAA-1058 / DSM 17464 / G20) (Desulfovibrio alaskensis).